Consider the following 377-residue polypeptide: Histidinol-phosphate aminotransferase (377 aa).

Residue Lys232 is modified to N6-(pyridoxal phosphate)lysine.

The protein belongs to the class-II pyridoxal-phosphate-dependent aminotransferase family. Histidinol-phosphate aminotransferase subfamily. Homodimer. It depends on pyridoxal 5'-phosphate as a cofactor.

It catalyses the reaction L-histidinol phosphate + 2-oxoglutarate = 3-(imidazol-4-yl)-2-oxopropyl phosphate + L-glutamate. The protein operates within amino-acid biosynthesis; L-histidine biosynthesis; L-histidine from 5-phospho-alpha-D-ribose 1-diphosphate: step 7/9. The polypeptide is Histidinol-phosphate aminotransferase (Mycobacterium sp. (strain KMS)).